The primary structure comprises 399 residues: Argonaute-binding protein 1 (399 aa).

As to quaternary structure, component of the argonaute siRNA chaperone (ARC) complex composed of ago1, arb1 and arb2. Interacts with ago1.

The protein localises to the nucleus. The protein resides in the cytoplasm. Its function is as follows. Component of the argonaute siRNA chaperone (ARC) complex which is required for histone H3K9 methylation, heterochromatin assembly and siRNA generation. The ARC complex contains mostly double-stranded siRNA. Inhibits the release of the siRNA passenger strand from ago1 together with arb2. Inhibits the slicer activity of ago1. Required for swi6 localization to the centromeric repeats. This is Argonaute-binding protein 1 (arb1) from Schizosaccharomyces pombe (strain 972 / ATCC 24843) (Fission yeast).